We begin with the raw amino-acid sequence, 306 residues long: Curved DNA-binding protein (306 aa).

One can recognise a J domain in the interval 5-69 (DYYAIMGVKP…QRRAEYDQMW (65 aa)).

The protein localises to the cytoplasm. The protein resides in the nucleoid. In terms of biological role, DNA-binding protein that preferentially recognizes a curved DNA sequence. It is probably a functional analog of DnaJ; displays overlapping activities with DnaJ, but functions under different conditions, probably acting as a molecular chaperone in an adaptive response to environmental stresses other than heat shock. Lacks autonomous chaperone activity; binds native substrates and targets them for recognition by DnaK. Its activity is inhibited by the binding of CbpM. In Escherichia coli O127:H6 (strain E2348/69 / EPEC), this protein is Curved DNA-binding protein.